Reading from the N-terminus, the 345-residue chain is NADPH dehydrogenase (345 aa).

An FMN-binding site is contributed by 23–26; it reads SPMC. A substrate-binding site is contributed by Tyr-28. The FMN site is built by Ala-60 and Gln-102. 164 to 167 contributes to the substrate binding site; it reads HGAH. FMN is bound by residues Arg-215 and 307–308; that span reads GR.

Belongs to the NADH:flavin oxidoreductase/NADH oxidase family. NamA subfamily. In terms of assembly, homotetramer. It depends on FMN as a cofactor.

The enzyme catalyses A + NADPH + H(+) = AH2 + NADP(+). Its function is as follows. Catalyzes the reduction of the double bond of an array of alpha,beta-unsaturated aldehydes and ketones. It also reduces the nitro group of nitroester and nitroaromatic compounds. It could have a role in detoxification processes. The chain is NADPH dehydrogenase from Bacillus cereus (strain AH820).